The sequence spans 316 residues: Sulfate adenylyltransferase subunit 2 (316 aa).

The disordered stretch occupies residues 297 to 316; it reads RAIDRDQSGSMEKKKREGYF.

The protein belongs to the PAPS reductase family. CysD subfamily. Heterodimer composed of CysD, the smaller subunit, and CysN.

The catalysed reaction is sulfate + ATP + H(+) = adenosine 5'-phosphosulfate + diphosphate. The protein operates within sulfur metabolism; hydrogen sulfide biosynthesis; sulfite from sulfate: step 1/3. Functionally, with CysN forms the ATP sulfurylase (ATPS) that catalyzes the adenylation of sulfate producing adenosine 5'-phosphosulfate (APS) and diphosphate, the first enzymatic step in sulfur assimilation pathway. APS synthesis involves the formation of a high-energy phosphoric-sulfuric acid anhydride bond driven by GTP hydrolysis by CysN coupled to ATP hydrolysis by CysD. The sequence is that of Sulfate adenylyltransferase subunit 2 from Allorhizobium ampelinum (strain ATCC BAA-846 / DSM 112012 / S4) (Agrobacterium vitis (strain S4)).